A 209-amino-acid polypeptide reads, in one-letter code: NADH-ubiquinone oxidoreductase subunit 9 (209 aa).

The protein belongs to the complex I 30 kDa subunit family. Complex I is composed of about 30 different subunits.

The protein resides in the mitochondrion inner membrane. The enzyme catalyses a ubiquinone + NADH + 5 H(+)(in) = a ubiquinol + NAD(+) + 4 H(+)(out). Its function is as follows. Core subunit of the mitochondrial membrane respiratory chain NADH dehydrogenase (Complex I) that is believed to belong to the minimal assembly required for catalysis. Complex I functions in the transfer of electrons from NADH to the respiratory chain. The immediate electron acceptor for the enzyme is believed to be ubiquinone. This chain is NADH-ubiquinone oxidoreductase subunit 9 (NAD9), found in Paramecium tetraurelia.